Here is a 130-residue protein sequence, read N- to C-terminus: MSLQDPIADLFTRIRNGQSAKKVSVTMPNSKLKVAVAKVLKNEGYIADFAINGDVKPELSIELKYFEGKAVIENIQRVSRPGLRIYKRRDELPKVMGGLGIAIVSTSKGLMTDRAARSAGVGGEIIGFVA.

Belongs to the universal ribosomal protein uS8 family. Part of the 30S ribosomal subunit. Contacts proteins S5 and S12.

In terms of biological role, one of the primary rRNA binding proteins, it binds directly to 16S rRNA central domain where it helps coordinate assembly of the platform of the 30S subunit. The polypeptide is Small ribosomal subunit protein uS8 (Pseudoalteromonas translucida (strain TAC 125)).